Reading from the N-terminus, the 328-residue chain is Phosphate acyltransferase (328 aa).

It belongs to the PlsX family. Homodimer. Probably interacts with PlsY.

The protein resides in the cytoplasm. The enzyme catalyses a fatty acyl-[ACP] + phosphate = an acyl phosphate + holo-[ACP]. The protein operates within lipid metabolism; phospholipid metabolism. In terms of biological role, catalyzes the reversible formation of acyl-phosphate (acyl-PO(4)) from acyl-[acyl-carrier-protein] (acyl-ACP). This enzyme utilizes acyl-ACP as fatty acyl donor, but not acyl-CoA. The chain is Phosphate acyltransferase from Campylobacter jejuni subsp. jejuni serotype O:2 (strain ATCC 700819 / NCTC 11168).